Here is a 68-residue protein sequence, read N- to C-terminus: Large ribosomal subunit protein uL29 (68 aa).

This sequence belongs to the universal ribosomal protein uL29 family.

In Pyrococcus horikoshii (strain ATCC 700860 / DSM 12428 / JCM 9974 / NBRC 100139 / OT-3), this protein is Large ribosomal subunit protein uL29 (rpl29).